We begin with the raw amino-acid sequence, 865 residues long: Alanine--tRNA ligase (865 aa).

Zn(2+)-binding residues include H552, H556, C654, and H658.

This sequence belongs to the class-II aminoacyl-tRNA synthetase family. Requires Zn(2+) as cofactor.

It localises to the cytoplasm. The catalysed reaction is tRNA(Ala) + L-alanine + ATP = L-alanyl-tRNA(Ala) + AMP + diphosphate. Its function is as follows. Catalyzes the attachment of alanine to tRNA(Ala) in a two-step reaction: alanine is first activated by ATP to form Ala-AMP and then transferred to the acceptor end of tRNA(Ala). Also edits incorrectly charged Ser-tRNA(Ala) and Gly-tRNA(Ala) via its editing domain. This Coxiella burnetii (strain Dugway 5J108-111) protein is Alanine--tRNA ligase.